We begin with the raw amino-acid sequence, 152 residues long: Peptide deformylase (152 aa).

2 residues coordinate Fe cation: Cys-88 and His-130. Glu-131 is a catalytic residue. Residue His-134 coordinates Fe cation.

The protein belongs to the polypeptide deformylase family. Fe(2+) is required as a cofactor.

It catalyses the reaction N-terminal N-formyl-L-methionyl-[peptide] + H2O = N-terminal L-methionyl-[peptide] + formate. Its function is as follows. Removes the formyl group from the N-terminal Met of newly synthesized proteins. Requires at least a dipeptide for an efficient rate of reaction. N-terminal L-methionine is a prerequisite for activity but the enzyme has broad specificity at other positions. This chain is Peptide deformylase, found in Syntrophomonas wolfei subsp. wolfei (strain DSM 2245B / Goettingen).